The sequence spans 368 residues: MSAFQPTIKRRESTKIYVGNVPIGGDAPIAVQSMTNTRTTDVEATVAQIKSLERVGADIVRVSVPTMDAAEAFKQIKQQVNVPLVADIHFDYRIALKVAEYGVDCLRINPGNIGREDRVRAVVDCAQDKNIPIRIGVNAGSLEKDLQEKYGEPTPEALLESALRHVEILDRLNFDQFKVSVKASDVFLAVESYRLLAKAIKQPLHLGITEAGGARAGAVKSAVGLGMLLAEGIGDTLRISLAADPIEEIKVGFDILKSLRIRSRGINFIACPTCSRQEFDVIGTVNALEQRLEDIITPMDVSIIGCVVNGPGEALISDLGVTGGNKKSGYYLDGERQKERFDNEDIVNQLEAKIRAKVARQDPKNRII.

[4Fe-4S] cluster-binding residues include cysteine 271, cysteine 274, cysteine 306, and glutamate 313.

It belongs to the IspG family. [4Fe-4S] cluster is required as a cofactor.

It carries out the reaction (2E)-4-hydroxy-3-methylbut-2-enyl diphosphate + oxidized [flavodoxin] + H2O + 2 H(+) = 2-C-methyl-D-erythritol 2,4-cyclic diphosphate + reduced [flavodoxin]. It participates in isoprenoid biosynthesis; isopentenyl diphosphate biosynthesis via DXP pathway; isopentenyl diphosphate from 1-deoxy-D-xylulose 5-phosphate: step 5/6. In terms of biological role, converts 2C-methyl-D-erythritol 2,4-cyclodiphosphate (ME-2,4cPP) into 1-hydroxy-2-methyl-2-(E)-butenyl 4-diphosphate. This Haemophilus influenzae (strain 86-028NP) protein is 4-hydroxy-3-methylbut-2-en-1-yl diphosphate synthase (flavodoxin).